Consider the following 306-residue polypeptide: D-alanine--D-alanine ligase (306 aa).

Catalysis depends on residues glutamate 15 and serine 150. In terms of domain architecture, ATP-grasp spans 101 to 303 (KLLWKSLSLR…FDELILKILK (203 aa)). 134–189 (ILKLKFPVVIKPNNAGSSIGITIVNHPDLLIDSINLAFNYSNNIIIEKFLKGTEYT) contributes to the ATP binding site. The Mg(2+) site is built by aspartate 257, glutamate 270, and asparagine 272. Serine 281 is a catalytic residue.

It belongs to the D-alanine--D-alanine ligase family. The cofactor is Mg(2+). Mn(2+) serves as cofactor.

It localises to the cytoplasm. It carries out the reaction 2 D-alanine + ATP = D-alanyl-D-alanine + ADP + phosphate + H(+). The protein operates within cell wall biogenesis; peptidoglycan biosynthesis. Its function is as follows. Cell wall formation. This Buchnera aphidicola subsp. Schizaphis graminum (strain Sg) protein is D-alanine--D-alanine ligase.